The primary structure comprises 80 residues: Kappa-actitoxin-Avd4i (80 aa).

The first 19 residues, 1–19 (MNKALFLCLVVLCAAVVFA), serve as a signal peptide directing secretion. Positions 20–31 (AEDLQKAKHAPF) are excised as a propeptide. Disulfide bonds link Cys41–Cys76, Cys43–Cys69, and Cys59–Cys77.

This sequence belongs to the sea anemone type 3 (BDS) potassium channel toxin family. In terms of tissue distribution, weakly expressed in the ectodermal tissue from the distal and proximal tentacles, body wall, and oral disk.

It localises to the secreted. The protein localises to the nematocyst. In terms of biological role, blocks Kv3 voltage-gated potassium channels. Reduces blood pressure. The polypeptide is Kappa-actitoxin-Avd4i (Anemonia viridis (Snakelocks anemone)).